An 874-amino-acid chain; its full sequence is MKSAEIREAFLRFFEEQGHTRVASSSLIPNNDPTLLFTNAGMNQFKDCFLGAEKRAYTRAVSSQKCVRAGGKHNDLENVGYTARHHTFFEMLGNFSFGDYFKRDAITFAWTFLTSEQWLNLPKEKLWVTVYATDDEAYDIWTKEVGVPAERMVRIGDNKGAPYASDNFWTMGDTGPCGPCTEIFYDHGPDIWGGPPGSPEEDGDRYIEIWNNVFMQFNRTADGVLHPLPAPSVDTGMGLERVSAVLQHVHSNYEIDLFQNLLAAAAKAIGCSNDGQASLKVVADHIRSCGFLIADGVLPSNEGRGYVLRRIIRRACRHGNKLGAKGSFFYQIVAALAAEMGEAFPELKSQQAHIERVLKAEEEQFAKTLEQGLRILEQDLAQLKGDVVPGDVVFKLYDTYGFPMDLTADIARERELTIDEAGFEREMDAQRERARSASAFGMDYNSLVKVDSATEFLGYDTTEGQGKIIALYKDGQSVDQLGEGEQGVVVLDRTPFYAESGGQVGDSGFLQAGAARFDVRDTTKTGGAFLHHGVVASGALLIGSPVEAKVDADVQHATSLNHSATHLLHEALRQVLGEHVQQKGSLVDSQRLRFDFSHFEAVKPEQIKQLEDIVNREIRKNTPVETELTDIETAKAKGAMALFGEKYGDTVRVLSMGGDFSVELCGGIHAKRTGDISLFKIISEGGVASGVRRIEAVTGAAALAYLNAAEEQVKEAAQLVKGNRDNLIDKLSAVLERNRQLEKQLEQLQAKAASAAGDDLSNAAVEVKGAKVLAARLDGQDGKALLALVDQLKNKLGHAVILLGSEHEGKVVLVAGVTKDLSSQLKAGDLMKQAAAAVGGKGGGRPDMAQGGGVDVAALDQALALAVPFAEQGL.

Zn(2+) contacts are provided by H562, H566, C665, and H669.

This sequence belongs to the class-II aminoacyl-tRNA synthetase family. It depends on Zn(2+) as a cofactor.

The protein resides in the cytoplasm. The enzyme catalyses tRNA(Ala) + L-alanine + ATP = L-alanyl-tRNA(Ala) + AMP + diphosphate. In terms of biological role, catalyzes the attachment of alanine to tRNA(Ala) in a two-step reaction: alanine is first activated by ATP to form Ala-AMP and then transferred to the acceptor end of tRNA(Ala). Also edits incorrectly charged Ser-tRNA(Ala) and Gly-tRNA(Ala) via its editing domain. In Pseudomonas putida (strain ATCC 700007 / DSM 6899 / JCM 31910 / BCRC 17059 / LMG 24140 / F1), this protein is Alanine--tRNA ligase.